Consider the following 156-residue polypeptide: Small ribosomal subunit protein uS7 (156 aa).

Belongs to the universal ribosomal protein uS7 family. Part of the 30S ribosomal subunit. Contacts proteins S9 and S11.

Its function is as follows. One of the primary rRNA binding proteins, it binds directly to 16S rRNA where it nucleates assembly of the head domain of the 30S subunit. Is located at the subunit interface close to the decoding center, probably blocks exit of the E-site tRNA. The protein is Small ribosomal subunit protein uS7 of Sodalis glossinidius (strain morsitans).